Reading from the N-terminus, the 73-residue chain is Antitoxin VapB2 (73 aa).

As to quaternary structure, forms a homodimer, which binds to a toxin homodimer, which then oligomerizes further to a hetero-octamer. When bound to toxin VapC2 the toxin activity is inhibited; 1 antitoxin may suffice to inhibit toxin.

In terms of biological role, antitoxin component of a type II toxin-antitoxin (TA) system. Upon expression in M.smegmatis neutralizes the effect of cognate toxin VapC2. The C-terminal helix of the antitoxin may obstruct the toxin's RNA-binding groove, blocking access to the active sites. Additionally, the C-terminal arginine of the antitoxin may remove Mg(2+) ions from the toxin active sites. The polypeptide is Antitoxin VapB2 (vapB2) (Mycobacterium tuberculosis (strain ATCC 25618 / H37Rv)).